A 414-amino-acid chain; its full sequence is WD repeat-containing protein jip5 (414 aa).

5 WD repeats span residues P9–D48, R73–K112, A118–S159, V222–E263, and D319–D356. Positions R39–I65 are disordered. The interval V357–D414 is disordered. Acidic residues predominate over residues D369–E383. Positions R394–G403 are enriched in basic residues.

It belongs to the WD repeat WDR55 family.

The protein resides in the nucleus. The protein localises to the nucleolus. In Aspergillus clavatus (strain ATCC 1007 / CBS 513.65 / DSM 816 / NCTC 3887 / NRRL 1 / QM 1276 / 107), this protein is WD repeat-containing protein jip5 (jip5).